The sequence spans 1186 residues: MSVKFLLGRAGSGKTSYIIDSITEQLKAAPDGDPIIFLVPEQATFQMEQAILRRSDISGFSRLHILSFQRLSQKVLEEQGGIAKADLSDTGKEMIIKNILLQRKDDLEILEKVAVKSGFSEKLSRLISEARMYEITPEMLEQISQELDLIHLKQKLQEISQVFTDYETFLQHQGYHHQEDRLSKAGQKMEGNNISFLAGSTCYIDGFSGFTPQELKLLEGLLTKCSNIELALTLPPQFTGKIDDELHLFHPTLKTYNQVWELAVNNDIEIKKSKHFPNENEEHRSASSLPRFKDNPALAHLEKEWGKNKINPYDSEPTGLSIVEGTNLRNEIDKIAREIKLLVRDHGMRYKDIAVIVRELESYEPVIKAVFNDYKIPHFLDRKEPVHHHPLVEFLRSSVETVISNWDYEPLFRMLKTGLLPISSEEIFQVENYVLAHGISGKDWKKQGKWNFIANFDLERENIAPSNRNKQYLSEINSIKGKVRDTLLEFDSKLRGINKSESLSAQFKNQEAEEDNLLSVREISTYLWELIEQLQIEYQLEEWSLEAEERKDFVEMQLHNQLWDTVIDLLDQMVTFLGEQKVTLSEYLQIIESGLANIKLGLLPATLDQVLVGTADRSRYHEIKVLFMAGVSDGLYPAKIDDDGIIDDRERITLRQHDVEFAPTTEQKLYQEQYLIYNVLTQPSQKLYLSYPAADSEGRTMSPSTIISDIQEMFPELFQEYQNDGPENDEDFRQYIIDGKKAVSNLIKLINKVGHPEKLAEDKQQLLAYLINEHPDLFYSTPEIKALDYKKSLSPLTQEVIDKLYPNKIATSVSGLESFCQCPFRHFAEQNLRLKEREYFRLEPASLGLFYHAGLKLFWDKLQENNLTWHKLKTEEREALVSEIVEVLSERLKNRILLASERYKYFKKKLHELLSRAVEVLSWYSDDKGFYPVGSEIGFGKDEPLSTLELELPSFPNKKVQLKGRIDRIDTGKKDGDLYLRVIDYKGKSKNLELRDLYYGLDLQLAAYMTVAMRNSDKLTGDQMFPGGMLYFGVENPVVPTDKPVSPAQARDKLKSTLKMRGYLIDDEEVLDLMTREDENSQDLLPYKLRTSSPGFYKNSKVLSEQEFLAVLNYTESKLVELAERVLSGEIAPYPYKDGGYSACTYCPYLAVCQFDLNYKEHKFWNVPAKGDYLSLILEEMEEVKE.

Residues 1–308 enclose the UvrD-like helicase ATP-binding domain; the sequence is MSVKFLLGRA…AHLEKEWGKN (308 aa). An ATP-binding site is contributed by 8 to 15; sequence GRAGSGKT. Residues 288-620 enclose the UvrD-like helicase C-terminal domain; that stretch reads SLPRFKDNPA…LVGTADRSRY (333 aa). Residues C822, C1144, C1147, and C1153 each coordinate [4Fe-4S] cluster.

This sequence belongs to the helicase family. AddB/RexB type 1 subfamily. As to quaternary structure, heterodimer of AddA and AddB. It depends on Mg(2+) as a cofactor. Requires [4Fe-4S] cluster as cofactor.

Functionally, the heterodimer acts as both an ATP-dependent DNA helicase and an ATP-dependent, dual-direction single-stranded exonuclease. Recognizes the chi site generating a DNA molecule suitable for the initiation of homologous recombination. The AddB subunit has 5' -&gt; 3' nuclease activity but not helicase activity. The chain is ATP-dependent helicase/deoxyribonuclease subunit B from Natranaerobius thermophilus (strain ATCC BAA-1301 / DSM 18059 / JW/NM-WN-LF).